Here is a 104-residue protein sequence, read N- to C-terminus: MSEKINANQDNDRQITLVDEQGNEELFEILFTFTSEDYGKSYVLLYPAAVSDDDDVEVQAFSYDADADGDVTSSDLHEITDDDEWNMVQGVLNTFLSDDRLSGE.

This sequence belongs to the UPF0473 family.

The sequence is that of UPF0473 protein LJ_0477 from Lactobacillus johnsonii (strain CNCM I-12250 / La1 / NCC 533).